The primary structure comprises 369 residues: C-C chemokine receptor type 9 (369 aa).

The Extracellular portion of the chain corresponds to 1–48 (MTPTDFTSPIPNMADDYGSESTSSMEDYVNFNFTDFYCEKNNVRQFAS). An N-linked (GlcNAc...) asparagine glycan is attached at asparagine 32. 2 disulfides stabilise this stretch: cysteine 38–cysteine 289 and cysteine 119–cysteine 198. A helical membrane pass occupies residues 49 to 74 (HFLPPLYWLVFIVGALGNSLVILVYW). Residues 75–85 (YCTRVKTMTDM) are Cytoplasmic-facing. The chain crosses the membrane as a helical span at residues 86 to 109 (FLLNLAIADLLFLVTLPFWAIAAA). Topologically, residues 110-120 (DQWKFQTFMCK) are extracellular. Residues 121–150 (VVNSMYKMNFYSCVLLIMCISVDRYIAIAQ) traverse the membrane as a helical segment. The Cytoplasmic segment spans residues 151 to 159 (AMRAHTWRE). Residues 160–185 (KRLLYSKMVCFTIWVLAAALCIPEIL) traverse the membrane as a helical segment. Over 186–208 (YSQIKEESGIAICTMVYPSDEST) the chain is Extracellular. The chain crosses the membrane as a helical span at residues 209-243 (KLKSAVLTLKVILGFFLPFVVMACCYTIIIHTLIQ). Over 244-248 (AKKSS) the chain is Cytoplasmic. A helical transmembrane segment spans residues 249–283 (KHKALKVTITVLTVFVLSQFPYNCILLVQTIDAYA). The Extracellular segment spans residues 284–290 (MFISNCA). A helical transmembrane segment spans residues 291 to 321 (VSTNIDICFQVTQTIAFFHSCLNPVLYVFVG). Residues 322-369 (ERFRRDLVKTLKNLGCISQAQWVSFTRREGSLKLSSMLLETTSGALSL) lie on the Cytoplasmic side of the membrane.

Belongs to the G-protein coupled receptor 1 family. As to expression, highly expressed in the thymus and low in lymph nodes and spleen.

It is found in the cell membrane. Functionally, receptor for chemokine SCYA25/TECK. Subsequently transduces a signal by increasing the intracellular calcium ions level. In terms of biological role, (Microbial infection) Alternative coreceptor with CD4 for HIV-1 infection. This chain is C-C chemokine receptor type 9 (CCR9), found in Homo sapiens (Human).